A 182-amino-acid polypeptide reads, in one-letter code: MNLNKIVAGDDIPNDIYVIIEISSNSSPIKYEVDKKSGMLFVDRFIPTPMFYPCNYGYINHTLSLDGDPLDVLVPSHYPIKSSCVIHCKPIGILNMQDESGDDAKIIAVPKSKICQEYKNINDISDISELLKKQITHFFQNYKTLEKEKWVEIIGWGNCQDAKLEINDAYNRAKKNSIFLNK.

Substrate contacts are provided by lysine 30, arginine 44, and tyrosine 56. Residues aspartate 66, aspartate 71, and aspartate 103 each contribute to the Mg(2+) site. Tyrosine 142 provides a ligand contact to substrate.

Belongs to the PPase family. As to quaternary structure, homohexamer. Requires Mg(2+) as cofactor.

Its subcellular location is the cytoplasm. It carries out the reaction diphosphate + H2O = 2 phosphate + H(+). Its function is as follows. Catalyzes the hydrolysis of inorganic pyrophosphate (PPi) forming two phosphate ions. The sequence is that of Inorganic pyrophosphatase from Buchnera aphidicola subsp. Acyrthosiphon pisum (strain APS) (Acyrthosiphon pisum symbiotic bacterium).